The sequence spans 466 residues: Argininosuccinate lyase (466 aa).

It belongs to the lyase 1 family. Argininosuccinate lyase subfamily.

It is found in the cytoplasm. It carries out the reaction 2-(N(omega)-L-arginino)succinate = fumarate + L-arginine. The protein operates within amino-acid biosynthesis; L-arginine biosynthesis; L-arginine from L-ornithine and carbamoyl phosphate: step 3/3. This is Argininosuccinate lyase from Desulfovibrio desulfuricans (strain ATCC 27774 / DSM 6949 / MB).